The primary structure comprises 45 residues: Enterotoxin (45 aa).

One of 3 components (of 35, 45 and 105 kDa) of the enterotoxin.

Functionally, one of 3 components required for cytotoxicity (tested in African green monkey Vero cells); the complex is not hemolytic. The polypeptide is Enterotoxin (Bacillus cereus).